The chain runs to 406 residues: Tryptophan 2,3-dioxygenase (406 aa).

Substrate contacts are provided by residues 72-76 (FIVTH) and R144. H328 is a binding site for heme. Residue T342 coordinates substrate.

The protein belongs to the tryptophan 2,3-dioxygenase family. As to quaternary structure, homotetramer. Dimer of dimers. Heme serves as cofactor.

It carries out the reaction L-tryptophan + O2 = N-formyl-L-kynurenine. The protein operates within amino-acid degradation; L-tryptophan degradation via kynurenine pathway; L-kynurenine from L-tryptophan: step 1/2. In terms of biological role, heme-dependent dioxygenase that catalyzes the oxidative cleavage of the L-tryptophan (L-Trp) pyrrole ring and converts L-tryptophan to N-formyl-L-kynurenine. Catalyzes the oxidative cleavage of the indole moiety. In Xenopus tropicalis (Western clawed frog), this protein is Tryptophan 2,3-dioxygenase.